The primary structure comprises 289 residues: Splicing factor C9orf78 homolog (289 aa).

Residues 1–12 (MPVVRKIFRRRR) are compositionally biased toward basic residues. 2 disordered regions span residues 1–27 (MPVV…SEEV) and 86–109 (GKDK…TNRR). Residues 5-58 (RKIFRRRRGDSESEEDEQDSEEVRLKLEETREVQNLRKRPNGVSAVALLVGEKV) are interaction with SNRNP200. Serine 15 and serine 17 each carry phosphoserine. Position 147 is a phosphotyrosine (tyrosine 147). The span at 232 to 283 (LNAPIRRNKEEPKARPLRVGDTEKPEPERSPPNRKRPANEKATDDYHYEKFK) shows a compositional bias: basic and acidic residues. The tract at residues 232–289 (LNAPIRRNKEEPKARPLRVGDTEKPEPERSPPNRKRPANEKATDDYHYEKFKKMNRRY) is disordered. Threonine 253 is subject to Phosphothreonine. Serine 261 is modified (phosphoserine).

Belongs to the TLS1 family. In terms of assembly, component of the spliceosome. Interacts with SNRNP200; the interaction is direct. Interacts with PRPF8.

The protein localises to the nucleus. The protein resides in the chromosome. It localises to the centromere. Functionally, plays a role in pre-mRNA splicing by promoting usage of the upstream 3'-splice site at alternative NAGNAG splice sites; these are sites featuring alternative acceptor motifs separated by only a few nucleotides. May also modulate exon inclusion events. Plays a role in spliceosomal remodeling by displacing WBP4 from SNRNP200 and may act to inhibit SNRNP200 helicase activity. Binds U5 snRNA. Required for proper chromosome segregation. Not required for splicing of shelterin components. This Pongo abelii (Sumatran orangutan) protein is Splicing factor C9orf78 homolog.